Reading from the N-terminus, the 562-residue chain is Isochorismate synthase 2, chloroplastic (562 aa).

The N-terminal 55 residues, 1 to 55 (MASLQCSFHFLGTNPKKYNPSSIFQSYSRTSFTKLSSRVSRQRFLRCTLSMNGCE), are a transit peptide targeting the chloroplast.

This sequence belongs to the isochorismate synthase family. It depends on Mg(2+) as a cofactor.

Its subcellular location is the plastid. The protein localises to the chloroplast. It carries out the reaction chorismate = isochorismate. It participates in siderophore biosynthesis; salicylate biosynthesis. Its function is as follows. Isochorismate synthase involved in the synthesis of salicylic acid (SA) required for both local and systemic acquired resistance (LAR and SAR) while SA synthesized through the phenylalanine ammonium lyase (PAL) pathway seems to potentiate plant cell death. Also involved in phylloquinone (vitamin K1) synthesis. Has no isochorismate pyruvate lyase (IPL) activity. In Arabidopsis thaliana (Mouse-ear cress), this protein is Isochorismate synthase 2, chloroplastic (ICS2).